The following is a 1189-amino-acid chain: Pesticidal crystal protein Cry1Ca (1189 aa).

The protein belongs to the delta endotoxin family.

Its function is as follows. Promotes colloidosmotic lysis by binding to the midgut epithelial cells of many lepidopteran larvae including Spodoptera species. This chain is Pesticidal crystal protein Cry1Ca (cry1Ca), found in Bacillus thuringiensis subsp. aizawai.